Consider the following 506-residue polypeptide: Maturase K (506 aa).

The protein belongs to the intron maturase 2 family. MatK subfamily.

The protein localises to the plastid. Its subcellular location is the chloroplast. Functionally, usually encoded in the trnK tRNA gene intron. Probably assists in splicing its own and other chloroplast group II introns. The chain is Maturase K from Atractylodes lancea (Atractylodes japonica).